The chain runs to 424 residues: Folate-like transporter 2 (424 aa).

N-linked (GlcNAc...) asparagine glycosylation is present at N35. The next 6 helical transmembrane spans lie at 48–68, 71–91, 99–119, 136–156, 164–184, and 233–253; these read IWTY…DVFL, PLLV…VFGK, LEVF…YIYV, ALLV…GLNW, IISL…PGVE, and PLIL…YQVT. The N-linked (GlcNAc...) asparagine glycan is linked to N254. Transmembrane regions (helical) follow at residues 299–319, 324–344, 361–381, and 392–412; these read WGDL…FWMS, IVVL…TTTI, LFGI…AVVI, and FVVY…IFGI.

The protein belongs to the reduced folate carrier (RFC) transporter (TC 2.A.48) family.

It localises to the membrane. Unlike folt-1, does not appear to act as a folate transporter. This chain is Folate-like transporter 2 (folt-2), found in Caenorhabditis elegans.